The primary structure comprises 397 residues: Putative protein FAM47D (397 aa).

Belongs to the FAM47 family.

The chain is Putative protein FAM47D (FAM47DP) from Homo sapiens (Human).